Reading from the N-terminus, the 224-residue chain is DNA repair and recombination protein RadB (224 aa).

Belongs to the eukaryotic RecA-like protein family. RadB subfamily.

Its function is as follows. Involved in DNA repair and in homologous recombination. May regulate the cleavage reactions of the branch-structured DNA. Has a very weak ATPase activity that is not stimulated by DNA. Binds DNA but does not promote DNA strands exchange. The chain is DNA repair and recombination protein RadB from Thermococcus onnurineus (strain NA1).